The following is a 181-amino-acid chain: Peptidyl-tRNA hydrolase (181 aa).

Tyrosine 14 lines the tRNA pocket. The active-site Proton acceptor is the histidine 19. TRNA-binding residues include tyrosine 62, asparagine 64, and asparagine 108.

Belongs to the PTH family. Monomer.

The protein localises to the cytoplasm. It catalyses the reaction an N-acyl-L-alpha-aminoacyl-tRNA + H2O = an N-acyl-L-amino acid + a tRNA + H(+). Its function is as follows. Hydrolyzes ribosome-free peptidyl-tRNAs (with 1 or more amino acids incorporated), which drop off the ribosome during protein synthesis, or as a result of ribosome stalling. Functionally, catalyzes the release of premature peptidyl moieties from peptidyl-tRNA molecules trapped in stalled 50S ribosomal subunits, and thus maintains levels of free tRNAs and 50S ribosomes. The sequence is that of Peptidyl-tRNA hydrolase from Campylobacter jejuni subsp. doylei (strain ATCC BAA-1458 / RM4099 / 269.97).